A 244-amino-acid chain; its full sequence is 5-oxoprolinase subunit A (244 aa).

This sequence belongs to the LamB/PxpA family. Forms a complex composed of PxpA, PxpB and PxpC.

The enzyme catalyses 5-oxo-L-proline + ATP + 2 H2O = L-glutamate + ADP + phosphate + H(+). In terms of biological role, catalyzes the cleavage of 5-oxoproline to form L-glutamate coupled to the hydrolysis of ATP to ADP and inorganic phosphate. In Shigella dysenteriae serotype 1 (strain Sd197), this protein is 5-oxoprolinase subunit A.